A 509-amino-acid polypeptide reads, in one-letter code: Maturase K (509 aa).

This sequence belongs to the intron maturase 2 family. MatK subfamily.

The protein localises to the plastid. The protein resides in the chloroplast. Functionally, usually encoded in the trnK tRNA gene intron. Probably assists in splicing its own and other chloroplast group II introns. The protein is Maturase K of Avicennia marina (Grey mangrove).